Here is a 510-residue protein sequence, read N- to C-terminus: MEIRPAEISEILKKQIASFDTETDVAETGQVLSVGDGIARVFGLANVMAGEMVEFPNAGVQGMALNLENDNVGVVVFGDDKAIREGDTVTRTRRIVDVPVGKGLLGRVVDALGNPIDGKGPIEATERRLVETKAPGIIPRKSVHEPMQTGVKSIDALIPIGRGQRELVIGDRQTGKTAIIVDTFINQKPLNAQDDESKKLYCIYVAVGQKRSTVAQLVRTLEENGAMEYSIVIAATASEPAPMQFLAPYTGCAMGEYFRDNGMHALIVYDDLSKQAVAYRQMSLLLRRPPGREAYPGDVFYLHSRLLERAAKMSDEFGAGSLTALPVIETQAGDISAYIPTNVISITDGQIFLETELFFKGIRPAVNVGNSVSRVGSAAQIKAMKQVAGKIKLDLAQYREMAAFAQFASDLDASTQKLLARGARLTELLKQPQFKPLPVEEQVVSIFVGTRGYLDEVPVNRIGDFEAQLISEMKARSPEILDSIRNDREIKKETETKLVDFVKSFASSFA.

170-177 (GDRQTGKT) contacts ATP.

Belongs to the ATPase alpha/beta chains family. F-type ATPases have 2 components, CF(1) - the catalytic core - and CF(0) - the membrane proton channel. CF(1) has five subunits: alpha(3), beta(3), gamma(1), delta(1), epsilon(1). CF(0) has three main subunits: a(1), b(2) and c(9-12). The alpha and beta chains form an alternating ring which encloses part of the gamma chain. CF(1) is attached to CF(0) by a central stalk formed by the gamma and epsilon chains, while a peripheral stalk is formed by the delta and b chains.

It is found in the cell inner membrane. The enzyme catalyses ATP + H2O + 4 H(+)(in) = ADP + phosphate + 5 H(+)(out). Its function is as follows. Produces ATP from ADP in the presence of a proton gradient across the membrane. The alpha chain is a regulatory subunit. In Acidiphilium cryptum (strain JF-5), this protein is ATP synthase subunit alpha.